The sequence spans 340 residues: Uroporphyrinogen decarboxylase (340 aa).

Residues 21–25, Phe-40, Asp-71, Tyr-147, Ser-202, and His-316 each bind substrate; that span reads RQAGR.

The protein belongs to the uroporphyrinogen decarboxylase family. Homodimer.

The protein resides in the cytoplasm. It carries out the reaction uroporphyrinogen III + 4 H(+) = coproporphyrinogen III + 4 CO2. It functions in the pathway porphyrin-containing compound metabolism; protoporphyrin-IX biosynthesis; coproporphyrinogen-III from 5-aminolevulinate: step 4/4. Catalyzes the decarboxylation of four acetate groups of uroporphyrinogen-III to yield coproporphyrinogen-III. This Wolinella succinogenes (strain ATCC 29543 / DSM 1740 / CCUG 13145 / JCM 31913 / LMG 7466 / NCTC 11488 / FDC 602W) (Vibrio succinogenes) protein is Uroporphyrinogen decarboxylase.